Reading from the N-terminus, the 1399-residue chain is DNA-directed RNA polymerase subunit beta' (1399 aa).

The Zn(2+) site is built by cysteine 70, cysteine 72, cysteine 85, and cysteine 88. Residues aspartate 460, aspartate 462, and aspartate 464 each coordinate Mg(2+). Zn(2+) contacts are provided by cysteine 814, cysteine 888, cysteine 895, and cysteine 898.

The protein belongs to the RNA polymerase beta' chain family. In terms of assembly, the RNAP catalytic core consists of 2 alpha, 1 beta, 1 beta' and 1 omega subunit. When a sigma factor is associated with the core the holoenzyme is formed, which can initiate transcription. Requires Mg(2+) as cofactor. Zn(2+) is required as a cofactor.

It carries out the reaction RNA(n) + a ribonucleoside 5'-triphosphate = RNA(n+1) + diphosphate. DNA-dependent RNA polymerase catalyzes the transcription of DNA into RNA using the four ribonucleoside triphosphates as substrates. The chain is DNA-directed RNA polymerase subunit beta' from Stutzerimonas stutzeri (strain A1501) (Pseudomonas stutzeri).